Reading from the N-terminus, the 205-residue chain is Octanoyltransferase (205 aa).

Residues 30-205 (NSADELVWLL…ILKKEFYKIF (176 aa)) form the BPL/LPL catalytic domain. Substrate-binding positions include 68 to 75 (RGGKHTYH), 140 to 142 (AFG), and 153 to 155 (GIA). The Acyl-thioester intermediate role is filled by Cys171.

The protein belongs to the LipB family.

Its subcellular location is the cytoplasm. It catalyses the reaction octanoyl-[ACP] + L-lysyl-[protein] = N(6)-octanoyl-L-lysyl-[protein] + holo-[ACP] + H(+). It functions in the pathway protein modification; protein lipoylation via endogenous pathway; protein N(6)-(lipoyl)lysine from octanoyl-[acyl-carrier-protein]: step 1/2. Its function is as follows. Catalyzes the transfer of endogenously produced octanoic acid from octanoyl-acyl-carrier-protein onto the lipoyl domains of lipoate-dependent enzymes. Lipoyl-ACP can also act as a substrate although octanoyl-ACP is likely to be the physiological substrate. In Wolbachia pipientis wMel, this protein is Octanoyltransferase.